The sequence spans 400 residues: 3-phenylpropionate/cinnamic acid dioxygenase ferredoxin--NAD(+) reductase component (400 aa).

An FAD-binding site is contributed by T5–D36. S146–E174 is an NAD(+) binding site.

This sequence belongs to the bacterial ring-hydroxylating dioxygenase ferredoxin reductase family. As to quaternary structure, this dioxygenase system consists of four proteins: the two subunits of the hydroxylase component (HcaE and HcaF), a ferredoxin (HcaC) and a ferredoxin reductase (HcaD). FAD is required as a cofactor.

It catalyses the reaction 2 reduced [2Fe-2S]-[ferredoxin] + NAD(+) + H(+) = 2 oxidized [2Fe-2S]-[ferredoxin] + NADH. It functions in the pathway aromatic compound metabolism; 3-phenylpropanoate degradation. In terms of biological role, part of the multicomponent 3-phenylpropionate dioxygenase, that converts 3-phenylpropionic acid (PP) and cinnamic acid (CI) into 3-phenylpropionate-dihydrodiol (PP-dihydrodiol) and cinnamic acid-dihydrodiol (CI-dihydrodiol), respectively. In Escherichia coli O17:K52:H18 (strain UMN026 / ExPEC), this protein is 3-phenylpropionate/cinnamic acid dioxygenase ferredoxin--NAD(+) reductase component.